The sequence spans 129 residues: Thyroid hormone receptor alpha (129 aa).

The NR LBD domain occupies alanine 26–arginine 129. Arginine 91 is a binding site for 3,3',5-triiodo-L-thyronine.

Belongs to the nuclear hormone receptor family. NR1 subfamily.

It localises to the nucleus. Functionally, nuclear hormone receptor that can act as a repressor or activator of transcription. High affinity receptor for thyroid hormones, including triiodothyronine and thyroxine. This is Thyroid hormone receptor alpha (thra1) from Sparus aurata (Gilthead sea bream).